Here is a 319-residue protein sequence, read N- to C-terminus: Taste receptor type 2 member 30 (319 aa).

A topological domain (extracellular) is located at residue methionine 1. The helical transmembrane segment at 2–22 (ITFLPIIFSILIVVIFVIGNF) threads the bilayer. The Cytoplasmic portion of the chain corresponds to 23–46 (ANGFIALVNSIEWVKRQKISFVDQ). Residues 47-67 (ILTALAVSRVGLLWVLLLHWY) form a helical membrane-spanning segment. Residues 68–86 (ATQLNPAFYSVEVRITVYN) are Extracellular-facing. Residues 87 to 107 (VWAVTNHFSSWLATSLSMFYL) form a helical membrane-spanning segment. Residues 108–126 (LKIANFSNLIFLRIKRRVK) are Cytoplasmic-facing. Residues 127–147 (SVVLVILLGPLLFLVCHLFVI) form a helical membrane-spanning segment. Over 148-178 (NMDETIWTKEYEGNMTWKIKLRSAMYHSNMT) the chain is Extracellular. Residues asparagine 161 and asparagine 176 are each glycosylated (N-linked (GlcNAc...) asparagine). A helical transmembrane segment spans residues 179–199 (LTMLANFVPLTLTLISFLLLI). Topologically, residues 200-229 (CSLCKHLKKMQLHGKGSQDPSTKVHIKALQ) are cytoplasmic. A helical membrane pass occupies residues 230–250 (TVTSFLLLCAIYFLSMIISVC). Residues 251–259 (NLGRLEKQP) are Extracellular-facing. Residues 260–280 (VFMFCQAIIFSYPSTHPFILI) traverse the membrane as a helical segment. Topologically, residues 281–319 (LGNKKLKQIFLSVLWHVRYWVKDRSLRLHRFTRAALCKG) are cytoplasmic.

The protein belongs to the G-protein coupled receptor T2R family.

It is found in the membrane. Functionally, receptor that may play a role in the perception of bitterness and is gustducin-linked. May play a role in sensing the chemical composition of the gastrointestinal content. The activity of this receptor may stimulate alpha gustducin, mediate PLC-beta-2 activation and lead to the gating of TRPM5. In Pan troglodytes (Chimpanzee), this protein is Taste receptor type 2 member 30 (TAS2R30).